A 164-amino-acid chain; its full sequence is NADH-quinone oxidoreductase subunit B (164 aa).

Positions 38, 39, 104, and 133 each coordinate [4Fe-4S] cluster.

Belongs to the complex I 20 kDa subunit family. NDH-1 is composed of 14 different subunits. Subunits NuoB, C, D, E, F, and G constitute the peripheral sector of the complex. [4Fe-4S] cluster serves as cofactor.

The protein resides in the cell inner membrane. The catalysed reaction is a quinone + NADH + 5 H(+)(in) = a quinol + NAD(+) + 4 H(+)(out). Its function is as follows. NDH-1 shuttles electrons from NADH, via FMN and iron-sulfur (Fe-S) centers, to quinones in the respiratory chain. The immediate electron acceptor for the enzyme in this species is believed to be ubiquinone. Couples the redox reaction to proton translocation (for every two electrons transferred, four hydrogen ions are translocated across the cytoplasmic membrane), and thus conserves the redox energy in a proton gradient. This chain is NADH-quinone oxidoreductase subunit B, found in Protochlamydia amoebophila (strain UWE25).